The following is a 325-amino-acid chain: Beta-1,3-galactosyltransferase brn (325 aa).

Over 1–7 (MQSKHRK) the chain is Cytoplasmic. The chain crosses the membrane as a helical; Signal-anchor for type II membrane protein span at residues 8-28 (LLLRCLLVLPLILLVDYCGLL). Topologically, residues 29–325 (THLHELNFER…WNECRSANYA (297 aa)) are lumenal. Residues N149 and N166 are each glycosylated (N-linked (GlcNAc...) asparagine).

This sequence belongs to the glycosyltransferase 31 family.

The protein localises to the golgi apparatus membrane. The catalysed reaction is a ganglioside GM2 (d18:1(4E)) + UDP-alpha-D-galactose = a ganglioside GM1 (d18:1(4E)) + UDP + H(+). Functionally, neurogenic protein essential for the development and maintenance of epithelial structure. Required in the germline for establishing the follicular epithelium and for determining the dorsal-ventral polarity. Collaborates with Notch on the apical surface of follicle cells to mediate germline-follicle cell adhesion. Brn has a role in chorion formation. This Drosophila melanogaster (Fruit fly) protein is Beta-1,3-galactosyltransferase brn (brn).